The following is a 282-amino-acid chain: Ribosome biogenesis GTPase A (282 aa).

In terms of domain architecture, CP-type G spans 14–178; the sequence is RREVTEKLKL…LLDTPGILWP (165 aa). Residues 58 to 61, 86 to 87, 130 to 135, and Gly174 contribute to the GTP site; these read NKAD, NS, and NVGKST.

The protein belongs to the TRAFAC class YlqF/YawG GTPase family. MTG1 subfamily. In terms of assembly, interacts with ctc. Interacts with the immature 50S ribosome subunit. 2 molecules of rbgA bind to one 50S subunit.

Its subcellular location is the cytoplasm. Essential protein that is required for a late step of 50S ribosomal subunit assembly. Has GTPase activity that is stimulated by interaction with the immature 50S ribosome subunit. Binds to the 23S rRNA. Required for the association of ribosomal proteins rplP and rpmA with the large subunit. The protein is Ribosome biogenesis GTPase A of Bacillus pumilus (strain SAFR-032).